We begin with the raw amino-acid sequence, 440 residues long: Frizzled/smoothened-like sans CRD protein D (440 aa).

The N-terminal stretch at 1–27 (MFIILKFLISFFLICNFFNYNDHFASG) is a signal peptide. Over 28–85 (QTLPPGFCPSPLIYRNSTNRQNDIENGYLFIGQTNCTSPCPSLIFSENEWHRVYNMSL) the chain is Extracellular. N-linked (GlcNAc...) asparagine glycans are attached at residues asparagine 43, asparagine 62, and asparagine 82. Residues 86–106 (IAGTISMFALIFLIITYSPLV) form a helical membrane-spanning segment. Residues 107–110 (NKYN) are Cytoplasmic-facing. A helical transmembrane segment spans residues 111–131 (GYTRHTVGILFLFCGIFLTVT). The Extracellular portion of the chain corresponds to 132 to 162 (TDGRQLWDIDLGFEKYCPEPGRFARQSDTKC). The helical transmembrane segment at 163 to 183 (LVTAIFFQYGCVTSILWWAAI) threads the bilayer. Residues 184–200 (SVDLWMTIRKVKISKLQ) lie on the Cytoplasmic side of the membrane. Residues 201-221 (FITYAVILNIITLILTFAPIA) traverse the membrane as a helical segment. Residues 222-244 (SKQYGYGEAAIGCWLMDLKYQVG) lie on the Extracellular side of the membrane. A helical transmembrane segment spans residues 245–265 (YFWAPVGFCLCVGCVSIVLII). Residues 266–285 (REIYKVSDAIKKKLLAKHLK) lie on the Cytoplasmic side of the membrane. The helical transmembrane segment at 286–306 (PLMLIILMLSEFIYMFIFYSY) threads the bilayer. At 307–346 (TTSRRGHYHDVVEKYIRCLFINASNPSICEVDVSISSPAH) the chain is on the extracellular side. N-linked (GlcNAc...) asparagine glycosylation occurs at asparagine 328. Residues 347–367 (FFFHFCMRLMGIEGLIFFGFT) traverse the membrane as a helical segment. At 368 to 440 (RQTKRIWLRS…IELSGVDSKN (73 aa)) the chain is on the cytoplasmic side. A disordered region spans residues 395–428 (ISSDEKTSNSSHRTTRGCRETEFGESIEQSNDPE).

The protein belongs to the G-protein coupled receptor Fz/Smo family.

It is found in the membrane. The sequence is that of Frizzled/smoothened-like sans CRD protein D (fscD) from Dictyostelium discoideum (Social amoeba).